The chain runs to 165 residues: Protein SprT (165 aa).

The region spanning 20–163 (EKLTQANLKL…RCVHCGEQLV (144 aa)) is the SprT-like domain. Residue His78 participates in Zn(2+) binding. The active site involves Glu79. His82 contributes to the Zn(2+) binding site.

This sequence belongs to the SprT family. Requires Zn(2+) as cofactor.

It is found in the cytoplasm. The protein is Protein SprT of Escherichia coli O139:H28 (strain E24377A / ETEC).